Reading from the N-terminus, the 186-residue chain is Hydra actinoporin-like toxin 6 (186 aa).

The signal sequence occupies residues 1–21; it reads MLVYVCLVVILIQLPFGAAGG. The Cell attachment site signature appears at 158-160; the sequence is RAG.

The protein belongs to the actinoporin family. HALT subfamily. Octamer or nonamer in membranes. Monomer in the soluble state. In vitro, interacts with folate receptor alpha (of target organism). Expressed female germline during oogenesis.

The protein resides in the nematocyst. The protein localises to the secreted. It localises to the target cell membrane. In terms of biological role, pore-forming protein that forms hydrophilic pores and causes cytolysis. Compared to equinatoxin-2 (AC P61914), it reveals lower cytolysis activity (5-12-fold difference, tested on erythrocytes), a larger pore size (probably 2-3 nm) and different affinity to membrane lipids (100-fold lower affinity to sphingomyelin). Binds to sulfatides. Shows cytolytic activity on HeLa cells, with a different potency than its paralogs (from most potent to less potent: HALT-4&gt;HALT-6~HALT-1&gt;HALT-3&gt;HALT-7&gt;HALT-2). Pore formation is a multi-step process that involves specific recognition of membrane lipid by a protein aromatic residues rich region, firm binding to the membrane (mainly driven by hydrophobic interactions) accompanied by the transfer of the N-terminal region to the lipid-water interface and finally pore formation after oligomerization of monomers. In vitro, binds to the folate receptor alpha (FOLR1), a GPI-anchored membrane protein that plays a major role in the uptake of folate/folic acid into cells via endocytosis, suggesting a possible involvement of this receptor in the mechanism of HALT-1-induced cell lysis. In vivo, does not cause visible paralysis in larvae of the blowfly Sarcophaga faculata, the most common arthropod prey of Hydra. The protein is Hydra actinoporin-like toxin 6 of Hydra vulgaris (Hydra).